The chain runs to 322 residues: Lipoyl synthase (322 aa).

Residues Cys-66, Cys-71, Cys-77, Cys-92, Cys-96, Cys-99, and Ser-306 each coordinate [4Fe-4S] cluster. The 218-residue stretch at 78 to 295 folds into the Radical SAM core domain; sequence FSKGTATFMI…EKEAYELGFS (218 aa).

The protein belongs to the radical SAM superfamily. Lipoyl synthase family. The cofactor is [4Fe-4S] cluster.

The protein resides in the cytoplasm. The catalysed reaction is [[Fe-S] cluster scaffold protein carrying a second [4Fe-4S](2+) cluster] + N(6)-octanoyl-L-lysyl-[protein] + 2 oxidized [2Fe-2S]-[ferredoxin] + 2 S-adenosyl-L-methionine + 4 H(+) = [[Fe-S] cluster scaffold protein] + N(6)-[(R)-dihydrolipoyl]-L-lysyl-[protein] + 4 Fe(3+) + 2 hydrogen sulfide + 2 5'-deoxyadenosine + 2 L-methionine + 2 reduced [2Fe-2S]-[ferredoxin]. Its pathway is protein modification; protein lipoylation via endogenous pathway; protein N(6)-(lipoyl)lysine from octanoyl-[acyl-carrier-protein]: step 2/2. In terms of biological role, catalyzes the radical-mediated insertion of two sulfur atoms into the C-6 and C-8 positions of the octanoyl moiety bound to the lipoyl domains of lipoate-dependent enzymes, thereby converting the octanoylated domains into lipoylated derivatives. This chain is Lipoyl synthase, found in Neisseria meningitidis serogroup C (strain 053442).